A 324-amino-acid polypeptide reads, in one-letter code: Probable UDP-sugar transporter protein SLC35A4 (324 aa).

Over 1 to 18 (MSVEDGGMPGLSRPRQAR) the chain is Cytoplasmic. The chain crosses the membrane as a helical span at residues 19–39 (WTLMLLLSTAMYGAHAPLLAL). Topologically, residues 40–52 (CHVDGRVPFRPSS) are lumenal. The helical transmembrane segment at 53 to 73 (AVLLTELTKLLLCAFSLLVGW) threads the bilayer. Residues 74–85 (QAWPQGAPPWRQ) lie on the Cytoplasmic side of the membrane. A helical membrane pass occupies residues 86–106 (AAPFALSALLYGANNNLVIYL). Over 107–142 (QRYMDPSTYQVLSNLKIGSTAVLYCLCLRHRLSVRQ) the chain is Lumenal. A helical transmembrane segment spans residues 143-163 (GLALLLLMAAGACYAAGGLQV). The Cytoplasmic portion of the chain corresponds to 164–180 (PGNTLPRPPPAAAASPM). The chain crosses the membrane as a helical span at residues 181-201 (PLHITPLGLLLLILYCLISGL). The Lumenal portion of the chain corresponds to 202-214 (SSVYTELLMKRQQ). The chain crosses the membrane as a helical span at residues 215–235 (LPLALQNLFLYTFGVLLNLGL). At 236–250 (HAGGGPGPGLLEGFS) the chain is on the cytoplasmic side. A helical transmembrane segment spans residues 251–271 (GWAALVVLSQALNGLLMSVVM). The Lumenal portion of the chain corresponds to 272–275 (KHGS). Residues 276-298 (SITRLFVVSCSLVVNAVLSAVLL) traverse the membrane as a helical segment. Topologically, residues 299–324 (RLQLTAAFFLATLLIGLAMRLYYGSR) are cytoplasmic.

It belongs to the nucleotide-sugar transporter family. SLC35A subfamily. As to quaternary structure, found in a complex with SLC35A2 and SLC35A3.

The protein resides in the golgi apparatus membrane. The enzyme catalyses CDP-L-ribitol(in) + CDP(out) = CDP-L-ribitol(out) + CDP(in). Functionally, mediates the transport of CDP-ribitol. Does not exhibit CMP-sialic acid, UDP-galactose and UDP-N-acetylglucosamine transport activity. The chain is Probable UDP-sugar transporter protein SLC35A4 from Pongo abelii (Sumatran orangutan).